The sequence spans 347 residues: Holliday junction branch migration complex subunit RuvB (347 aa).

The tract at residues 4–186 (INEYGSERIV…FGMIFEMNFY (183 aa)) is large ATPase domain (RuvB-L). ATP-binding positions include Leu-25, Arg-26, Gly-67, Lys-70, Thr-71, Thr-72, 133-135 (EDF), Arg-176, Tyr-186, and Arg-223. Thr-71 lines the Mg(2+) pocket. The tract at residues 187 to 257 (TQEELKMIIT…IVEEVMRLLG (71 aa)) is small ATPAse domain (RuvB-S). Residues 260–347 (EFGLDEMDRK…GLFDGFGNIE (88 aa)) are head domain (RuvB-H). The DNA site is built by Arg-315 and Arg-320.

This sequence belongs to the RuvB family. As to quaternary structure, homohexamer. Forms an RuvA(8)-RuvB(12)-Holliday junction (HJ) complex. HJ DNA is sandwiched between 2 RuvA tetramers; dsDNA enters through RuvA and exits via RuvB. An RuvB hexamer assembles on each DNA strand where it exits the tetramer. Each RuvB hexamer is contacted by two RuvA subunits (via domain III) on 2 adjacent RuvB subunits; this complex drives branch migration. In the full resolvosome a probable DNA-RuvA(4)-RuvB(12)-RuvC(2) complex forms which resolves the HJ.

The protein localises to the cytoplasm. The catalysed reaction is ATP + H2O = ADP + phosphate + H(+). Its function is as follows. The RuvA-RuvB-RuvC complex processes Holliday junction (HJ) DNA during genetic recombination and DNA repair, while the RuvA-RuvB complex plays an important role in the rescue of blocked DNA replication forks via replication fork reversal (RFR). RuvA specifically binds to HJ cruciform DNA, conferring on it an open structure. The RuvB hexamer acts as an ATP-dependent pump, pulling dsDNA into and through the RuvAB complex. RuvB forms 2 homohexamers on either side of HJ DNA bound by 1 or 2 RuvA tetramers; 4 subunits per hexamer contact DNA at a time. Coordinated motions by a converter formed by DNA-disengaged RuvB subunits stimulates ATP hydrolysis and nucleotide exchange. Immobilization of the converter enables RuvB to convert the ATP-contained energy into a lever motion, pulling 2 nucleotides of DNA out of the RuvA tetramer per ATP hydrolyzed, thus driving DNA branch migration. The RuvB motors rotate together with the DNA substrate, which together with the progressing nucleotide cycle form the mechanistic basis for DNA recombination by continuous HJ branch migration. Branch migration allows RuvC to scan DNA until it finds its consensus sequence, where it cleaves and resolves cruciform DNA. The chain is Holliday junction branch migration complex subunit RuvB from Fervidobacterium nodosum (strain ATCC 35602 / DSM 5306 / Rt17-B1).